We begin with the raw amino-acid sequence, 153 residues long: Facilitator of iron transport 2 (153 aa).

Residues 1-18 (MKFSTIFGATTVMTAVSA) form the signal peptide. The disordered stretch occupies residues 73-98 (TEGPDTTSEKSTTKTLTLTNGSGSST). A compositionally biased stretch (low complexity) spans 85 to 98 (TKTLTLTNGSGSST). Residue asparagine 92 is glycosylated (N-linked (GlcNAc...) asparagine). Glycine 130 is lipidated: GPI-anchor amidated glycine. Residues 131-153 (AAPAAFQGASVGALALGLISYLL) constitute a propeptide, removed in mature form.

Post-translationally, the GPI-anchor is attached to the protein in the endoplasmic reticulum and serves to target the protein to the cell surface. There, the glucosamine-inositol phospholipid moiety is cleaved off and the GPI-modified mannoprotein is covalently attached via its lipidless GPI glycan remnant to the 1,6-beta-glucan of the outer cell wall layer.

It is found in the secreted. The protein localises to the cell wall. It localises to the membrane. Involved in the uptake of non-siderophore and siderophore sources of iron. Has a role in the retention of iron in the cell wall and periplasmic space. The protein is Facilitator of iron transport 2 (FIT2) of Saccharomyces cerevisiae (strain ATCC 204508 / S288c) (Baker's yeast).